The primary structure comprises 546 residues: Phosphatidylinositol 4-phosphate 5-kinase type-1 alpha (546 aa).

The PIPK domain maps to T66–V434. K88 is covalently cross-linked (Glycyl lysine isopeptide (Lys-Gly) (interchain with G-Cter in ubiquitin)). 2 disordered regions span residues P442–H475 and L491–S518. 2 stretches are compositionally biased toward low complexity: residues S450–G462 and G509–S518.

Interacts with RAC1. Interacts with TUT1. Forms a complex with CDH1/E-cadherin, CTNNB1/beta-catenin and CTNND1 at the plasma membrane upon calcium stimulation. Found in a ternary complex with IRS1 and DGKZ in the absence of insulin stimulation. Interacts with DGKZ. Interacts with PIP4K2C; the interaction inhibits PIP5K1A kinase activity. Highest expression in brain. Also detected in skeletal muscle, testis, brain and lung.

Its subcellular location is the cell membrane. It is found in the cytoplasm. The protein resides in the nucleus. The protein localises to the nucleus speckle. It localises to the cell projection. Its subcellular location is the ruffle. It is found in the lamellipodium. It catalyses the reaction a 1,2-diacyl-sn-glycero-3-phospho-(1D-myo-inositol 4-phosphate) + ATP = a 1,2-diacyl-sn-glycero-3-phospho-(1D-myo-inositol-4,5-bisphosphate) + ADP + H(+). The catalysed reaction is 1-octadecanoyl-2-(5Z,8Z,11Z,14Z)-eicosatetraenoyl-sn-glycero-3-phospho-1D-myo-inositol 4-phosphate + ATP = 1-octadecanoyl-2-(5Z,8Z,11Z,14Z)-eicosatetraenoyl-sn-glycero-3-phospho-1D-myo-inositol 4,5-bisphosphate + ADP + H(+). The enzyme catalyses 1,2-dihexadecanoyl-sn-glycero-3-phospho-(1D-myo-inositol-4-phosphate) + ATP = 1,2-dihexadecanoyl-sn-glycero-3-phospho-(1D-myo-inositol-4,5-bisphosphate) + ADP + H(+). It carries out the reaction 1-octadecanoyl-2-(9Z)-octadecenoyl-sn-glycero-3-phospho-1D-myo-inositol 4-phosphate + ATP = 1-octadecanoyl-2-(9Z)-octadecenoyl-sn-glycero-3-phospho-1D-myo-inositol 4,5-bisphosphate + ADP + H(+). It catalyses the reaction 1-octadecanoyl-2-(9Z)-octadecenoyl-sn-glycero-3-phospho-1D-myo-inositol + ATP = 1-octadecanoyl-2-(9Z)-octadecenoyl-sn-glycero-3-phospho-1D-myo-inositol 5-phosphate + ADP + H(+). The catalysed reaction is 1-octadecanoyl-2-(9Z,12Z)-octadecadienoyl-sn-glycero-3-phospho-1D-myo-inositol + ATP = 1-octadecanoyl-2-(9Z,12Z)-octadecadienoyl-sn-glycero-3-phospho-1D-myo-inositol 5-phosphate + ADP + H(+). The enzyme catalyses 1-octadecanoyl-2-(5Z,8Z,11Z,14Z-eicosatetraenoyl)-sn-glycero-3-phospho-(1D-myo-inositol) + ATP = 1-octadecanoyl-2-(5Z,8Z,11Z,14Z)-eicosatetraenoyl-sn-glycero-3-phospho-1D-myo-inositol 5-phosphate + ADP + H(+). It carries out the reaction 1,2-di-(9Z,12Z)-octadecadienoyl-sn-glycero-3-phospho-1D-myo-inositol + ATP = 1,2-di(9Z,12Z)-octadecadienoyl-sn-glycero-3-phospho-1D-myo-inositol 5-phosphate + ADP + H(+). Activated by phosphatidic acid. Functionally, catalyzes the phosphorylation of phosphatidylinositol 4-phosphate (PtdIns(4)P/PI4P) to form phosphatidylinositol 4,5-bisphosphate (PtdIns(4,5)P2/PIP2), a lipid second messenger that regulates several cellular processes such as signal transduction, vesicle trafficking, actin cytoskeleton dynamics, cell adhesion, and cell motility. PtdIns(4,5)P2 can directly act as a second messenger or can be utilized as a precursor to generate other second messengers: inositol 1,4,5-trisphosphate (IP3), diacylglycerol (DAG) or phosphatidylinositol-3,4,5-trisphosphate (PtdIns(3,4,5)P3/PIP3). PIP5K1A-mediated phosphorylation of PtdIns(4)P is the predominant pathway for PtdIns(4,5)P2 synthesis. Can also use phosphatidylinositol (PtdIns) as substrate in vitro. Together with PIP5K1C, is required for phagocytosis, both enzymes regulating different types of actin remodeling at sequential steps. Promotes particle ingestion by activating the WAS GTPase-binding protein that induces Arp2/3 dependent actin polymerization at the nascent phagocytic cup. Together with PIP5K1B, is required, after stimulation by G-protein coupled receptors, for the synthesis of IP3 that will induce stable platelet adhesion. Recruited to the plasma membrane by the E-cadherin/beta-catenin complex where it provides the substrate PtdIns(4,5)P2 for the production of PtdIns(3,4,5)P3, IP3 and DAG, that will mobilize internal calcium and drive keratinocyte differentiation. Positively regulates insulin-induced translocation of SLC2A4 to the cell membrane in adipocytes. Together with PIP5K1C has a role during embryogenesis. Independently of its catalytic activity, is required for membrane ruffling formation, actin organization and focal adhesion formation during directional cell migration by controlling integrin-induced translocation of the small GTPase RAC1 to the plasma membrane. Also functions in the nucleus where it acts as an activator of TUT1 adenylyltransferase activity in nuclear speckles, thereby regulating mRNA polyadenylation of a select set of mRNAs. The polypeptide is Phosphatidylinositol 4-phosphate 5-kinase type-1 alpha (Mus musculus (Mouse)).